The following is a 148-amino-acid chain: Short form salivary protein D7S1 (148 aa).

A signal peptide spans 1 to 21 (MKQNVFFLIAYFSLVFCMCNA). 3 cysteine pairs are disulfide-bonded: C28-C61, C41-C147, and C103-C119.

It belongs to the PBP/GOBP family. Female salivary gland.

The protein localises to the secreted. In terms of biological role, in contrast to the related D7 salivary proteins that can bind biogenic amines, does not bind serotonin. The chain is Short form salivary protein D7S1 from Aedes aegypti (Yellowfever mosquito).